Here is a 394-residue protein sequence, read N- to C-terminus: Succinate--CoA ligase [ADP-forming] subunit beta (394 aa).

Residues Lys46, 53 to 55 (GRG), Glu99, Cys102, and Glu107 contribute to the ATP site. Asn199 and Asp213 together coordinate Mg(2+). Substrate is bound by residues Asn264 and 321–323 (GIV).

It belongs to the succinate/malate CoA ligase beta subunit family. Heterotetramer of two alpha and two beta subunits. The cofactor is Mg(2+).

It carries out the reaction succinate + ATP + CoA = succinyl-CoA + ADP + phosphate. The catalysed reaction is GTP + succinate + CoA = succinyl-CoA + GDP + phosphate. Its pathway is carbohydrate metabolism; tricarboxylic acid cycle; succinate from succinyl-CoA (ligase route): step 1/1. Its function is as follows. Succinyl-CoA synthetase functions in the citric acid cycle (TCA), coupling the hydrolysis of succinyl-CoA to the synthesis of either ATP or GTP and thus represents the only step of substrate-level phosphorylation in the TCA. The beta subunit provides nucleotide specificity of the enzyme and binds the substrate succinate, while the binding sites for coenzyme A and phosphate are found in the alpha subunit. This is Succinate--CoA ligase [ADP-forming] subunit beta from Haemophilus influenzae (strain PittGG).